The chain runs to 65 residues: Large ribosomal subunit protein bL35 (65 aa).

It belongs to the bacterial ribosomal protein bL35 family.

In Xanthomonas campestris pv. campestris (strain ATCC 33913 / DSM 3586 / NCPPB 528 / LMG 568 / P 25), this protein is Large ribosomal subunit protein bL35.